Here is a 792-residue protein sequence, read N- to C-terminus: MNNQRKKTGNPSFNMLKRARNRVSTGSQLAKRFSKGLLSGQGPMKLVMAFVAFLRFLAIPPTAGILKRWGSFKKNGAINVLRGFRKEISNMLNIMNRRRRSVTMILMLLPTALAFHLTTRGGEPTLIVSKQERGKSLLFKTSAGVNMCTLIAMDLGELCEDTMTYKCPRMTEAEPDDVDCWCNATDTWVTYGTCSQTGEHRRDKRSVALDPHVGLGLETRTETWMSSEGAWKQIQKVETWALRHPGFTVIGLFLAHAIGTSITQKGIIFILLMLVTPSMAMRCVGIGNRDFVEGLSGATWVDVVLEHGSCVTTMAKNKPTLDIELLKTEVTNPAVLRKLCIEAKISNTTTDSRCPTQGEATLVEEQDTNFVCRRTFVDRGWGNGCGLFGKGSLITCAKFKCVTKLEGKIVQYENLKYSVIVTVHTGDQHQVGNETTEHGTIATITPQAPTSEIQLTDYGALTLDCSPRTGLDFNRVVLLTMKKKSWLVHKQWFLDLPLPWTSGASTSQETWNRQDLLVTFKTAHAKKQEVVVLGSQEGAMHTALTGATEIQTSGTTTIFAGHLKCRLKMDKLTLKGVSYVMCTGSFKLEKEVAETQHGTVLVQVKYEGTDAPCKIPFSSQDEKGVTQNGRLITANPIVIDKEKPVNIEAEPPFGESYIVVGAGEKALKLSWFKKGSSIGKMFEATARGARRMAILGDTAWDFGSIGGVFTSVGKLIHQIFGTAYGVLFSGVSWTMKIGIGILLTWLGLNSRSTSLSMTCIAVGMVTLYLGVMVQADSGCVINWKGKELKCGS.

The interaction with host EXOC1 stretch occupies residues 1 to 15; it reads MNNQRKKTGNPSFNM. At 1-101 the chain is on the cytoplasmic side; sequence MNNQRKKTGN…LNIMNRRRRS (101 aa). The interval 37 to 72 is hydrophobic; homodimerization of capsid protein C; it reads LLSGQGPMKLVMAFVAFLRFLAIPPTAGILKRWGSF. Residues 101-114 constitute a propeptide, ER anchor for the capsid protein C, removed in mature form by serine protease NS3; it reads SVTMILMLLPTALA. Residues 102–119 traverse the membrane as a helical segment; it reads VTMILMLLPTALAFHLTT. The Extracellular segment spans residues 120-242; the sequence is RGGEPTLIVS…QIQKVETWAL (123 aa). Residue asparagine 183 is glycosylated (N-linked (GlcNAc...) asparagine; by host). The helical transmembrane segment at 243–260 threads the bilayer; the sequence is RHPGFTVIGLFLAHAIGT. Residue serine 261 is a topological domain, cytoplasmic. A helical transmembrane segment spans residues 262–280; that stretch reads ITQKGIIFILLMLVTPSMA. Residues 281-725 are Extracellular-facing; the sequence is MRCVGIGNRD…IHQIFGTAYG (445 aa). 4 disulfides stabilise this stretch: cysteine 283-cysteine 310, cysteine 340-cysteine 401, cysteine 354-cysteine 385, and cysteine 372-cysteine 396. Asparagine 347 carries an N-linked (GlcNAc...) asparagine; by host glycan. Positions 378-391 are fusion peptide; the sequence is DRGWGNGCGLFGKG. N-linked (GlcNAc...) asparagine; by host glycosylation occurs at asparagine 433. 2 disulfide bridges follow: cysteine 465/cysteine 565 and cysteine 582/cysteine 613. Residues 726-746 form a helical membrane-spanning segment; that stretch reads VLFSGVSWTMKIGIGILLTWL. Topologically, residues 747-752 are cytoplasmic; sequence GLNSRS. A helical membrane pass occupies residues 753–775; that stretch reads TSLSMTCIAVGMVTLYLGVMVQA. Residues 776-792 lie on the Extracellular side of the membrane; sequence DSGCVINWKGKELKCGS. Residues cysteine 779 and cysteine 790 are joined by a disulfide bond.

Homodimer. Interacts (via N-terminus) with host EXOC1 (via C-terminus); this interaction results in EXOC1 degradation through the proteasome degradation pathway. In terms of assembly, forms heterodimers with envelope protein E in the endoplasmic reticulum and Golgi. As to quaternary structure, homodimer; in the endoplasmic reticulum and Golgi. Interacts with protein prM. Interacts with non-structural protein 1. Homodimer; Homohexamer when secreted. Interacts with envelope protein E. Post-translationally, specific enzymatic cleavages in vivo yield mature proteins. Cleavages in the lumen of endoplasmic reticulum are performed by host signal peptidase, wereas cleavages in the cytoplasmic side are performed by serine protease NS3. Signal cleavage at the 2K-4B site requires a prior NS3 protease-mediated cleavage at the 4A-2K site. N-glycosylated. In terms of processing, N-glycosylated. The excreted form is glycosylated and this is required for efficient secretion of the protein from infected cells.

The protein localises to the virion. Its subcellular location is the host nucleus. It is found in the host cytoplasm. The protein resides in the host perinuclear region. It localises to the secreted. The protein localises to the virion membrane. Its subcellular location is the host endoplasmic reticulum membrane. In terms of biological role, plays a role in virus budding by binding to the cell membrane and gathering the viral RNA into a nucleocapsid that forms the core of a mature virus particle. During virus entry, may induce genome penetration into the host cytoplasm after hemifusion induced by the surface proteins. Can migrate to the cell nucleus where it modulates host functions. Overcomes the anti-viral effects of host EXOC1 by sequestering and degrading the latter through the proteasome degradation pathway. Functionally, inhibits RNA silencing by interfering with host Dicer. Its function is as follows. Prevents premature fusion activity of envelope proteins in trans-Golgi by binding to envelope protein E at pH6.0. After virion release in extracellular space, gets dissociated from E dimers. Acts as a chaperone for envelope protein E during intracellular virion assembly by masking and inactivating envelope protein E fusion peptide. prM is the only viral peptide matured by host furin in the trans-Golgi network probably to avoid catastrophic activation of the viral fusion activity in acidic Golgi compartment prior to virion release. prM-E cleavage is inefficient, and many virions are only partially matured. These uncleaved prM would play a role in immune evasion. In terms of biological role, may play a role in virus budding. Exerts cytotoxic effects by activating a mitochondrial apoptotic pathway through M ectodomain. May display a viroporin activity. Functionally, binds to host cell surface receptor and mediates fusion between viral and cellular membranes. Envelope protein is synthesized in the endoplasmic reticulum in the form of heterodimer with protein prM. They play a role in virion budding in the ER, and the newly formed immature particle is covered with 60 spikes composed of heterodimer between precursor prM and envelope protein E. The virion is transported to the Golgi apparatus where the low pH causes dissociation of PrM-E heterodimers and formation of E homodimers. prM-E cleavage is inefficient, and many virions are only partially matured. These uncleaved prM would play a role in immune evasion. Its function is as follows. Involved in immune evasion, pathogenesis and viral replication. Once cleaved off the polyprotein, is targeted to three destinations: the viral replication cycle, the plasma membrane and the extracellular compartment. Essential for viral replication. Required for formation of the replication complex and recruitment of other non-structural proteins to the ER-derived membrane structures. Excreted as a hexameric lipoparticle that plays a role against host immune response. Antagonizing the complement function. Binds to the host macrophages and dendritic cells. Inhibits signal transduction originating from Toll-like receptor 3 (TLR3). Disrupts the host endothelial glycocalyx layer of host pulmonary microvascular endothelial cells, inducing degradation of sialic acid and shedding of heparan sulfate proteoglycans. NS1 induces expression of sialidases, heparanase, and activates cathepsin L, which activates heparanase via enzymatic cleavage. These effects are probably linked to the endothelial hyperpermeability observed in severe dengue disease. This Aedes aegypti (Yellowfever mosquito) protein is Genome polyprotein.